A 320-amino-acid polypeptide reads, in one-letter code: Bifunctional ligase/repressor BirA (320 aa).

Residues 22 to 41 (GEQLGERLGMSRAAINKHIQ) constitute a DNA-binding region (H-T-H motif). The BPL/LPL catalytic domain maps to 66-254 (LLDADRIHSQ…KLRAALELFE (189 aa)). Biotin contacts are provided by residues 89–91 (STN), Q112, 116–118 (RGR), and K183.

It belongs to the biotin--protein ligase family.

It carries out the reaction biotin + L-lysyl-[protein] + ATP = N(6)-biotinyl-L-lysyl-[protein] + AMP + diphosphate + H(+). Functionally, acts both as a biotin--[acetyl-CoA-carboxylase] ligase and a biotin-operon repressor. In the presence of ATP, BirA activates biotin to form the BirA-biotinyl-5'-adenylate (BirA-bio-5'-AMP or holoBirA) complex. HoloBirA can either transfer the biotinyl moiety to the biotin carboxyl carrier protein (BCCP) subunit of acetyl-CoA carboxylase, or bind to the biotin operator site and inhibit transcription of the operon. The polypeptide is Bifunctional ligase/repressor BirA (Salmonella typhimurium (strain LT2 / SGSC1412 / ATCC 700720)).